The sequence spans 175 residues: Peptide deformylase (175 aa).

Residues Cys99 and His141 each contribute to the Fe cation site. The active site involves Glu142. His145 serves as a coordination point for Fe cation.

This sequence belongs to the polypeptide deformylase family. Fe(2+) serves as cofactor.

It carries out the reaction N-terminal N-formyl-L-methionyl-[peptide] + H2O = N-terminal L-methionyl-[peptide] + formate. Functionally, removes the formyl group from the N-terminal Met of newly synthesized proteins. Requires at least a dipeptide for an efficient rate of reaction. N-terminal L-methionine is a prerequisite for activity but the enzyme has broad specificity at other positions. This is Peptide deformylase from Rickettsia prowazekii (strain Madrid E).